The sequence spans 202 residues: FMN-dependent NADH:quinone oxidoreductase (202 aa).

Residues serine 9 and 95–98 (MYNF) each bind FMN.

It belongs to the azoreductase type 1 family. As to quaternary structure, homodimer. Requires FMN as cofactor.

The enzyme catalyses 2 a quinone + NADH + H(+) = 2 a 1,4-benzosemiquinone + NAD(+). It catalyses the reaction N,N-dimethyl-1,4-phenylenediamine + anthranilate + 2 NAD(+) = 2-(4-dimethylaminophenyl)diazenylbenzoate + 2 NADH + 2 H(+). In terms of biological role, quinone reductase that provides resistance to thiol-specific stress caused by electrophilic quinones. Functionally, also exhibits azoreductase activity. Catalyzes the reductive cleavage of the azo bond in aromatic azo compounds to the corresponding amines. This is FMN-dependent NADH:quinone oxidoreductase from Chromobacterium violaceum (strain ATCC 12472 / DSM 30191 / JCM 1249 / CCUG 213 / NBRC 12614 / NCIMB 9131 / NCTC 9757 / MK).